A 414-amino-acid polypeptide reads, in one-letter code: Multifunctional CCA protein (414 aa).

ATP-binding residues include G8 and R11. CTP is bound by residues G8 and R11. Residues D21 and D23 each contribute to the Mg(2+) site. 3 residues coordinate ATP: R91, R137, and R140. CTP-binding residues include R91, R137, and R140. Residues 228–329 (TGIHTLLTLA…LKLLDTIDVW (102 aa)) form the HD domain.

This sequence belongs to the tRNA nucleotidyltransferase/poly(A) polymerase family. Bacterial CCA-adding enzyme type 1 subfamily. As to quaternary structure, monomer. Can also form homodimers and oligomers. It depends on Mg(2+) as a cofactor. The cofactor is Ni(2+).

It carries out the reaction a tRNA precursor + 2 CTP + ATP = a tRNA with a 3' CCA end + 3 diphosphate. The enzyme catalyses a tRNA with a 3' CCA end + 2 CTP + ATP = a tRNA with a 3' CCACCA end + 3 diphosphate. Its function is as follows. Catalyzes the addition and repair of the essential 3'-terminal CCA sequence in tRNAs without using a nucleic acid template. Adds these three nucleotides in the order of C, C, and A to the tRNA nucleotide-73, using CTP and ATP as substrates and producing inorganic pyrophosphate. tRNA 3'-terminal CCA addition is required both for tRNA processing and repair. Also involved in tRNA surveillance by mediating tandem CCA addition to generate a CCACCA at the 3' terminus of unstable tRNAs. While stable tRNAs receive only 3'-terminal CCA, unstable tRNAs are marked with CCACCA and rapidly degraded. The polypeptide is Multifunctional CCA protein (Edwardsiella ictaluri (strain 93-146)).